Here is a 72-residue protein sequence, read N- to C-terminus: VKRPMNAFMVWSQNERRKIMDQWPDMHNAEISKSLGRSSQLLQDSEKIPFVKEAGRLRLKHMADYPNYKYRP.

The HMG box DNA-binding region spans 1–69 (VKRPMNAFMV…KHMADYPNYK (69 aa)).

The protein localises to the nucleus. The polypeptide is SRY-related protein MG44 (Tarentola mauritanica (Common wall gecko)).